A 292-amino-acid polypeptide reads, in one-letter code: Ribosomal protein L11 methyltransferase (292 aa).

4 residues coordinate S-adenosyl-L-methionine: Thr143, Gly164, Asp186, and Asn227.

The protein belongs to the methyltransferase superfamily. PrmA family.

The protein resides in the cytoplasm. It carries out the reaction L-lysyl-[protein] + 3 S-adenosyl-L-methionine = N(6),N(6),N(6)-trimethyl-L-lysyl-[protein] + 3 S-adenosyl-L-homocysteine + 3 H(+). Its function is as follows. Methylates ribosomal protein L11. This is Ribosomal protein L11 methyltransferase from Hahella chejuensis (strain KCTC 2396).